The chain runs to 371 residues: 4-hydroxy-3-methylbut-2-en-1-yl diphosphate synthase (flavodoxin) (371 aa).

[4Fe-4S] cluster is bound by residues Cys270, Cys273, Cys305, and Glu312.

This sequence belongs to the IspG family. The cofactor is [4Fe-4S] cluster.

The enzyme catalyses (2E)-4-hydroxy-3-methylbut-2-enyl diphosphate + oxidized [flavodoxin] + H2O + 2 H(+) = 2-C-methyl-D-erythritol 2,4-cyclic diphosphate + reduced [flavodoxin]. Its pathway is isoprenoid biosynthesis; isopentenyl diphosphate biosynthesis via DXP pathway; isopentenyl diphosphate from 1-deoxy-D-xylulose 5-phosphate: step 5/6. Converts 2C-methyl-D-erythritol 2,4-cyclodiphosphate (ME-2,4cPP) into 1-hydroxy-2-methyl-2-(E)-butenyl 4-diphosphate. In Shewanella woodyi (strain ATCC 51908 / MS32), this protein is 4-hydroxy-3-methylbut-2-en-1-yl diphosphate synthase (flavodoxin).